We begin with the raw amino-acid sequence, 208 residues long: Octanoyltransferase (208 aa).

Positions 30–208 (GTASEAVFIL…ILKQEFYKIF (179 aa)) constitute a BPL/LPL catalytic domain. Substrate contacts are provided by residues 69–76 (RGGKFTYH), 142–144 (SIG), and 155–157 (GVA). The active-site Acyl-thioester intermediate is the cysteine 173.

The protein belongs to the LipB family.

The protein localises to the cytoplasm. The enzyme catalyses octanoyl-[ACP] + L-lysyl-[protein] = N(6)-octanoyl-L-lysyl-[protein] + holo-[ACP] + H(+). Its pathway is protein modification; protein lipoylation via endogenous pathway; protein N(6)-(lipoyl)lysine from octanoyl-[acyl-carrier-protein]: step 1/2. In terms of biological role, catalyzes the transfer of endogenously produced octanoic acid from octanoyl-acyl-carrier-protein onto the lipoyl domains of lipoate-dependent enzymes. Lipoyl-ACP can also act as a substrate although octanoyl-ACP is likely to be the physiological substrate. This Orientia tsutsugamushi (strain Ikeda) (Rickettsia tsutsugamushi) protein is Octanoyltransferase.